The chain runs to 199 residues: MLLGRLTSQLLRAVPWAGGRPPWPVSGVLGSRVCGPLYSTSPAGPGRAASLPRKGAQLELEEMLVPRKMSVSPLESWLTARCFLPRLDTGTAGTVAPPQSYQCPPSQIGEGAEQGDEGVADAPQIQCKNVLKIRRRKMNHHKYRKLVKKTRFLRRKVQEGRLRRKQIKFEKDLRRIWLKAGLKEAPEGWQTPKIYLRGK.

Belongs to the mitochondrion-specific ribosomal protein mS38 family. In terms of assembly, component of the mitochondrial small ribosomal subunit (mt-SSU). Mature mammalian 55S mitochondrial ribosomes consist of a small (28S) and a large (39S) subunit. The 28S small subunit contains a 12S ribosomal RNA (12S mt-rRNA) and 30 different proteins. The 39S large subunit contains a 16S rRNA (16S mt-rRNA), a copy of mitochondrial valine transfer RNA (mt-tRNA(Val)), which plays an integral structural role, and 52 different proteins. Interacts with Aurora-A. As to expression, ubiquitously expressed and especially highly expressed in heart, skeletal muscle and testis.

The protein localises to the mitochondrion matrix. It localises to the nucleus. Functionally, may act as a negative regulator of Aurora-A kinase, by down-regulation through proteasome-dependent degradation. This is Small ribosomal subunit protein mS38 (AURKAIP1) from Homo sapiens (Human).